Consider the following 321-residue polypeptide: 4-hydroxy-3-methylbut-2-enyl diphosphate reductase (321 aa).

[4Fe-4S] cluster is bound at residue C12. Residues H41 and H74 each coordinate (2E)-4-hydroxy-3-methylbut-2-enyl diphosphate. Residues H41 and H74 each coordinate dimethylallyl diphosphate. Isopentenyl diphosphate-binding residues include H41 and H74. C96 contacts [4Fe-4S] cluster. Position 124 (H124) interacts with (2E)-4-hydroxy-3-methylbut-2-enyl diphosphate. Dimethylallyl diphosphate is bound at residue H124. H124 is a binding site for isopentenyl diphosphate. The active-site Proton donor is E126. T167 is a (2E)-4-hydroxy-3-methylbut-2-enyl diphosphate binding site. C197 contributes to the [4Fe-4S] cluster binding site. Residues S225, S226, N227, and S269 each contribute to the (2E)-4-hydroxy-3-methylbut-2-enyl diphosphate site. Positions 225, 226, 227, and 269 each coordinate dimethylallyl diphosphate. S225, S226, N227, and S269 together coordinate isopentenyl diphosphate.

It belongs to the IspH family. As to quaternary structure, homodimer. The cofactor is [4Fe-4S] cluster.

It catalyses the reaction isopentenyl diphosphate + 2 oxidized [2Fe-2S]-[ferredoxin] + H2O = (2E)-4-hydroxy-3-methylbut-2-enyl diphosphate + 2 reduced [2Fe-2S]-[ferredoxin] + 2 H(+). The catalysed reaction is dimethylallyl diphosphate + 2 oxidized [2Fe-2S]-[ferredoxin] + H2O = (2E)-4-hydroxy-3-methylbut-2-enyl diphosphate + 2 reduced [2Fe-2S]-[ferredoxin] + 2 H(+). Its pathway is isoprenoid biosynthesis; dimethylallyl diphosphate biosynthesis; dimethylallyl diphosphate from (2E)-4-hydroxy-3-methylbutenyl diphosphate: step 1/1. It participates in isoprenoid biosynthesis; isopentenyl diphosphate biosynthesis via DXP pathway; isopentenyl diphosphate from 1-deoxy-D-xylulose 5-phosphate: step 6/6. Catalyzes the conversion of 1-hydroxy-2-methyl-2-(E)-butenyl 4-diphosphate (HMBPP) into a mixture of isopentenyl diphosphate (IPP) and dimethylallyl diphosphate (DMAPP). Acts in the terminal step of the DOXP/MEP pathway for isoprenoid precursor biosynthesis. This is 4-hydroxy-3-methylbut-2-enyl diphosphate reductase from Escherichia coli O6:K15:H31 (strain 536 / UPEC).